A 288-amino-acid chain; its full sequence is UDP-3-O-acyl-N-acetylglucosamine deacetylase (288 aa).

Residues histidine 79, histidine 236, and aspartate 240 each contribute to the Zn(2+) site. Catalysis depends on histidine 263, which acts as the Proton donor.

The protein belongs to the LpxC family. It depends on Zn(2+) as a cofactor.

It carries out the reaction a UDP-3-O-[(3R)-3-hydroxyacyl]-N-acetyl-alpha-D-glucosamine + H2O = a UDP-3-O-[(3R)-3-hydroxyacyl]-alpha-D-glucosamine + acetate. It participates in glycolipid biosynthesis; lipid IV(A) biosynthesis; lipid IV(A) from (3R)-3-hydroxytetradecanoyl-[acyl-carrier-protein] and UDP-N-acetyl-alpha-D-glucosamine: step 2/6. Catalyzes the hydrolysis of UDP-3-O-myristoyl-N-acetylglucosamine to form UDP-3-O-myristoylglucosamine and acetate, the committed step in lipid A biosynthesis. In Rickettsia bellii (strain OSU 85-389), this protein is UDP-3-O-acyl-N-acetylglucosamine deacetylase.